The primary structure comprises 177 residues: Endoribonuclease YbeY (177 aa).

Zn(2+)-binding residues include histidine 118, histidine 122, and histidine 128.

This sequence belongs to the endoribonuclease YbeY family. Requires Zn(2+) as cofactor.

It localises to the cytoplasm. Functionally, single strand-specific metallo-endoribonuclease involved in late-stage 70S ribosome quality control and in maturation of the 3' terminus of the 16S rRNA. The sequence is that of Endoribonuclease YbeY from Mycobacterium bovis (strain ATCC BAA-935 / AF2122/97).